The chain runs to 236 residues: Biosynthetic peptidoglycan transglycosylase (236 aa).

The helical transmembrane segment at 12–31 (ALLWFAAGSIAVVLVLRWVP) threads the bilayer.

The protein belongs to the glycosyltransferase 51 family.

It localises to the cell inner membrane. It carries out the reaction [GlcNAc-(1-&gt;4)-Mur2Ac(oyl-L-Ala-gamma-D-Glu-L-Lys-D-Ala-D-Ala)](n)-di-trans,octa-cis-undecaprenyl diphosphate + beta-D-GlcNAc-(1-&gt;4)-Mur2Ac(oyl-L-Ala-gamma-D-Glu-L-Lys-D-Ala-D-Ala)-di-trans,octa-cis-undecaprenyl diphosphate = [GlcNAc-(1-&gt;4)-Mur2Ac(oyl-L-Ala-gamma-D-Glu-L-Lys-D-Ala-D-Ala)](n+1)-di-trans,octa-cis-undecaprenyl diphosphate + di-trans,octa-cis-undecaprenyl diphosphate + H(+). Its pathway is cell wall biogenesis; peptidoglycan biosynthesis. Functionally, peptidoglycan polymerase that catalyzes glycan chain elongation from lipid-linked precursors. The chain is Biosynthetic peptidoglycan transglycosylase from Pseudomonas entomophila (strain L48).